Reading from the N-terminus, the 240-residue chain is MDVYGMSSPDLLRIDDLLDFSNDEIFSSSSTVTSSAASSAASSENPFSFPSSTYTSPTLLTDFTHDLCVPSDDAAHLEWLSRFVDDSFSDFPANPLTMTVRPEISFTGKPRSRRSRAPAPSVAGTWAPMSESELCHSVAKPKPKKVYNAESVTADGARRCTHCASEKTPQWRTGPLGPKTLCNACGVRYKSGRLVPEYRPASSPTFVLTQHSNSHRKVMELRRQKEQQESCVRIPPFQPQ.

The segment at 104 to 124 is disordered; sequence ISFTGKPRSRRSRAPAPSVAG. A Nuclear localization signal motif is present at residues 109–116; sequence KPRSRRSR. The GATA-type zinc finger occupies 154–208; sequence ADGARRCTHCASEKTPQWRTGPLGPKTLCNACGVRYKSGRLVPEYRPASSPTFVL.

This sequence belongs to the type IV zinc-finger family. Class A subfamily. As to expression, expressed in roots, flowers and leaves, and to a lower extent in stems.

The protein localises to the nucleus. Transcriptional activator that specifically binds 5'-GATA-3' or 5'-GAT-3' motifs within gene promoters. May be involved in the regulation of some light-responsive genes. In Arabidopsis thaliana (Mouse-ear cress), this protein is GATA transcription factor 4 (GATA4).